Here is a 179-residue protein sequence, read N- to C-terminus: MAELATIARPYAEALFGVAEAGDIAAWSTLVQELAQVARLPEVLSIASSPKVSRAQVSELLLTAVKSPLKDNAQAKNLVQMLVDNHRLPLLPEIAVQFEELKNAREGAADVLIVSAFPLEGAQLNDLVASLERKFKRKLKPTVEVDSSLIGGVRVTVGDEVLDTSVRARLASMQTALTA.

This sequence belongs to the ATPase delta chain family. As to quaternary structure, F-type ATPases have 2 components, F(1) - the catalytic core - and F(0) - the membrane proton channel. F(1) has five subunits: alpha(3), beta(3), gamma(1), delta(1), epsilon(1). F(0) has three main subunits: a(1), b(2) and c(10-14). The alpha and beta chains form an alternating ring which encloses part of the gamma chain. F(1) is attached to F(0) by a central stalk formed by the gamma and epsilon chains, while a peripheral stalk is formed by the delta and b chains.

The protein localises to the cell inner membrane. Functionally, f(1)F(0) ATP synthase produces ATP from ADP in the presence of a proton or sodium gradient. F-type ATPases consist of two structural domains, F(1) containing the extramembraneous catalytic core and F(0) containing the membrane proton channel, linked together by a central stalk and a peripheral stalk. During catalysis, ATP synthesis in the catalytic domain of F(1) is coupled via a rotary mechanism of the central stalk subunits to proton translocation. This protein is part of the stalk that links CF(0) to CF(1). It either transmits conformational changes from CF(0) to CF(1) or is implicated in proton conduction. The polypeptide is ATP synthase subunit delta (Paraburkholderia xenovorans (strain LB400)).